A 489-amino-acid chain; its full sequence is Cytochrome P450 monooxygenase prhB (489 aa).

A run of 3 helical transmembrane segments spans residues methionine 1–tyrosine 21, valine 212–alanine 232, and leucine 287–leucine 307. Residues asparagine 347 and asparagine 379 are each glycosylated (N-linked (GlcNAc...) asparagine). Cysteine 431 contributes to the heme binding site.

Belongs to the cytochrome P450 family. It depends on heme as a cofactor.

The protein resides in the membrane. The protein operates within secondary metabolite biosynthesis; terpenoid biosynthesis. Functionally, cytochrome P450 monooxygenase; part of the gene cluster that mediates the biosynthesis of paraherquonin, a meroterpenoid with a unique, highly congested hexacyclic molecular architecture. The first step of the pathway is the synthesis of 3,5-dimethylorsellinic acid (DMOA) by the polyketide synthase prhL. Synthesis of DMOA is followed by farnesylation by the prenyltransferase prhE, methylesterification by the methyl-transferase prhM, epoxidation of the prenyl chain by the flavin-dependent monooxygenase prhF, and cyclization of the farnesyl moiety by the terpene cyclase prhH, to yield the tetracyclic intermediate, protoaustinoid A. The short chain dehydrogenase prhI then oxidizes the C-3 alcohol group of the terpene cyclase product to transform protoaustinoid A into protoaustinoid B. The FAD-binding monooxygenase prhJ catalyzes the oxidation of protoaustinoid B into preaustinoid A which is further oxidized into preaustinoid A1 by FAD-binding monooxygenase phrK. Finally, prhA leads to berkeleydione via the berkeleyone B intermediate. PrhA is a multifunctional dioxygenase that first desaturates at C5-C6 to form berkeleyone B, followed by rearrangement of the A/B-ring to form the cycloheptadiene moiety in berkeleydione. Berkeleydione serves as the key intermediate for the biosynthesis of paraherquonin as well as many other meroterpenoids. The cytochrome P450 monooxygenases prhB, prhD, and prhN, as well as the isomerase prhC, are probably involved in the late stage of paraherquonin biosynthesis, after the production of berkeleydione. Especially prhC might be a multifunctional enzyme that catalyzes the D-ring expansion via intramolecular methoxy rearrangement, as well as the hydrolysis of the expanded D-ring. The protein is Cytochrome P450 monooxygenase prhB of Penicillium brasilianum.